Here is a 158-residue protein sequence, read N- to C-terminus: NADH-quinone oxidoreductase subunit B (158 aa).

Positions 37, 38, 102, and 132 each coordinate [4Fe-4S] cluster.

It belongs to the complex I 20 kDa subunit family. In terms of assembly, NDH-1 is composed of 14 different subunits. Subunits NuoB, C, D, E, F, and G constitute the peripheral sector of the complex. [4Fe-4S] cluster is required as a cofactor.

It is found in the cell inner membrane. It catalyses the reaction a quinone + NADH + 5 H(+)(in) = a quinol + NAD(+) + 4 H(+)(out). In terms of biological role, NDH-1 shuttles electrons from NADH, via FMN and iron-sulfur (Fe-S) centers, to quinones in the respiratory chain. The immediate electron acceptor for the enzyme in this species is believed to be ubiquinone. Couples the redox reaction to proton translocation (for every two electrons transferred, four hydrogen ions are translocated across the cytoplasmic membrane), and thus conserves the redox energy in a proton gradient. In Acidithiobacillus ferrooxidans (strain ATCC 23270 / DSM 14882 / CIP 104768 / NCIMB 8455) (Ferrobacillus ferrooxidans (strain ATCC 23270)), this protein is NADH-quinone oxidoreductase subunit B.